Reading from the N-terminus, the 452-residue chain is Minor capsid protein (452 aa).

Composition is skewed to basic and acidic residues over residues 219-236 and 247-258; these read VDKPEDKPKPVFDDKGKQ and GKPDISKPGEKQ. The tract at residues 219–258 is disordered; that stretch reads VDKPEDKPKPVFDDKGKQPTDTVPPVDNGKPDISKPGEKQ.

The protein belongs to the closteroviridae minor capsid protein family.

The protein resides in the virion. Minor capsid protein that encapsidates the 5'-terminal portion of the viral genome. In Lettuce infectious yellows virus (isolate United States/92) (LIYV), this protein is Minor capsid protein.